The following is a 564-amino-acid chain: Proline--tRNA ligase (564 aa).

This sequence belongs to the class-II aminoacyl-tRNA synthetase family. ProS type 1 subfamily. As to quaternary structure, homodimer.

It is found in the cytoplasm. The catalysed reaction is tRNA(Pro) + L-proline + ATP = L-prolyl-tRNA(Pro) + AMP + diphosphate. Functionally, catalyzes the attachment of proline to tRNA(Pro) in a two-step reaction: proline is first activated by ATP to form Pro-AMP and then transferred to the acceptor end of tRNA(Pro). As ProRS can inadvertently accommodate and process non-cognate amino acids such as alanine and cysteine, to avoid such errors it has two additional distinct editing activities against alanine. One activity is designated as 'pretransfer' editing and involves the tRNA(Pro)-independent hydrolysis of activated Ala-AMP. The other activity is designated 'posttransfer' editing and involves deacylation of mischarged Ala-tRNA(Pro). The misacylated Cys-tRNA(Pro) is not edited by ProRS. In Xylella fastidiosa (strain 9a5c), this protein is Proline--tRNA ligase.